The chain runs to 180 residues: Protein GrpE (180 aa).

This sequence belongs to the GrpE family. In terms of assembly, homodimer.

The protein resides in the cytoplasm. Its function is as follows. Participates actively in the response to hyperosmotic and heat shock by preventing the aggregation of stress-denatured proteins, in association with DnaK and GrpE. It is the nucleotide exchange factor for DnaK and may function as a thermosensor. Unfolded proteins bind initially to DnaJ; upon interaction with the DnaJ-bound protein, DnaK hydrolyzes its bound ATP, resulting in the formation of a stable complex. GrpE releases ADP from DnaK; ATP binding to DnaK triggers the release of the substrate protein, thus completing the reaction cycle. Several rounds of ATP-dependent interactions between DnaJ, DnaK and GrpE are required for fully efficient folding. This Picrophilus torridus (strain ATCC 700027 / DSM 9790 / JCM 10055 / NBRC 100828 / KAW 2/3) protein is Protein GrpE.